A 1328-amino-acid chain; its full sequence is ATP-dependent DNA helicase hus2/rqh1 (1328 aa).

2 stretches are compositionally biased toward low complexity: residues 217 to 236 and 244 to 254; these read NNLP…NDNN and ASPTPSSVSSQ. Residues 217-254 are disordered; sequence NNLPFPRLNNNNTNNNNDNNAIEKRDSASPTPSSVSSQ. One can recognise a Helicase ATP-binding domain in the interval 528-707; sequence INGTLSGKDV…INTLRMENCL (180 aa). 555–562 serves as a coordination point for ATP; it reads AVIEGGAS. The DEAH box motif lies at 651–654; sequence DEAH. A Helicase C-terminal domain is found at 728-876; it reads LYTELYRFIS…ETKERQRQML (149 aa). The region spanning 1115-1195 is the HRDC domain; the sequence is IDVMTRCLKD…QKFIDEKEQN (81 aa). Disordered regions lie at residues 1224–1247 and 1260–1328; these read EQGF…GDEE and NSQS…QNYR. The segment covering 1260–1269 has biased composition (polar residues); that stretch reads NSQSLTQTGS. Residues 1283–1300 are compositionally biased toward basic residues; sequence KSYRHKRGSTSYSRKRKY.

It belongs to the helicase family. RecQ subfamily. As to quaternary structure, interacts with top3.

The protein localises to the nucleus. The catalysed reaction is Couples ATP hydrolysis with the unwinding of duplex DNA by translocating in the 3'-5' direction.. The enzyme catalyses ATP + H2O = ADP + phosphate + H(+). Its function is as follows. ATP-dependent 3'-5' DNA-helicase. Has a role in the repair of UV-induced DNA damage in G2 via recombination-mediated repair. Also has a role in the repair of infrared-induced double DNA strand breaks. The protein is ATP-dependent DNA helicase hus2/rqh1 of Schizosaccharomyces pombe (strain 972 / ATCC 24843) (Fission yeast).